Reading from the N-terminus, the 344-residue chain is Fructose-1,6-bisphosphatase class 1 (344 aa).

Residues Glu-90, Asp-109, Leu-111, and Asp-112 each coordinate Mg(2+). Substrate is bound by residues 112–115 (DGSS) and Asn-200. Glu-271 provides a ligand contact to Mg(2+).

The protein belongs to the FBPase class 1 family. Homotetramer. It depends on Mg(2+) as a cofactor.

It localises to the cytoplasm. The catalysed reaction is beta-D-fructose 1,6-bisphosphate + H2O = beta-D-fructose 6-phosphate + phosphate. The protein operates within carbohydrate biosynthesis; gluconeogenesis. The polypeptide is Fructose-1,6-bisphosphatase class 1 (Nitrobacter vulgaris).